The primary structure comprises 158 residues: Ethylene-responsive transcription factor ERF120 (158 aa).

Positions 86–147 form a DNA-binding region, AP2/ERF; it reads KHKGVRKKPS…SARRGTKNGE (62 aa). Positions 134–158 are disordered; it reads VGRRSARRGTKNGEEASTKKTTEKN. Over residues 144–158 the composition is skewed to basic and acidic residues; that stretch reads KNGEEASTKKTTEKN.

This sequence belongs to the AP2/ERF transcription factor family. ERF subfamily.

It is found in the nucleus. In terms of biological role, probably acts as a transcriptional activator. Binds to the GCC-box pathogenesis-related promoter element. May be involved in the regulation of gene expression by stress factors and by components of stress signal transduction pathways. The sequence is that of Ethylene-responsive transcription factor ERF120 (ERF120) from Arabidopsis thaliana (Mouse-ear cress).